A 347-amino-acid chain; its full sequence is N-acetyl-gamma-glutamyl-phosphate reductase (347 aa).

C153 is a catalytic residue.

Belongs to the NAGSA dehydrogenase family. Type 1 subfamily.

The protein resides in the cytoplasm. It catalyses the reaction N-acetyl-L-glutamate 5-semialdehyde + phosphate + NADP(+) = N-acetyl-L-glutamyl 5-phosphate + NADPH + H(+). It participates in amino-acid biosynthesis; L-arginine biosynthesis; N(2)-acetyl-L-ornithine from L-glutamate: step 3/4. In terms of biological role, catalyzes the NADPH-dependent reduction of N-acetyl-5-glutamyl phosphate to yield N-acetyl-L-glutamate 5-semialdehyde. This Mycobacterium avium (strain 104) protein is N-acetyl-gamma-glutamyl-phosphate reductase.